Reading from the N-terminus, the 981-residue chain is Beta-glucuronidase (981 aa).

E500 acts as the Nucleophile in catalysis. Residues N561, W562, I563, S581, and E583 each contribute to the Mg(2+) site.

The protein belongs to the glycosyl hydrolase 2 family.

Its subcellular location is the periplasm. It catalyses the reaction a beta-D-glucuronoside + H2O = D-glucuronate + an alcohol. In terms of biological role, beta-glucuronidase involved in ulvan degradation. Ulvan is the main polysaccharide component of the Ulvales (green seaweed) cell wall. It is composed of disaccharide building blocks comprising 3-sulfated rhamnose (Rha3S) linked to D-glucuronic acid (GlcA), L-iduronic acid (IduA), or D-xylose (Xyl). Beta-glucuronidase removes GlcA side chains present on some O2 residues of Rha3S. Can remove the GlcA side chains from polymeric ulvan or from smaller oligomers. The chain is Beta-glucuronidase from Formosa agariphila (strain DSM 15362 / KCTC 12365 / LMG 23005 / KMM 3901 / M-2Alg 35-1).